The primary structure comprises 376 residues: Phosphate-binding protein (376 aa).

Disulfide bonds link cysteine 113–cysteine 158 and cysteine 306–cysteine 369.

Heterooligomer with human PON1. Found in human plasma.

It localises to the secreted. Phosphate-binding protein. The chain is Phosphate-binding protein from Unknown prokaryotic organism.